Here is a 238-residue protein sequence, read N- to C-terminus: MEKEKKDDEKPDLENSVDFSEQFNQLELLKTHGHLIPTGTQSLWVGNSDEDEEQEEKNEEWYQLQEKKMEKDPSKLLLWAAEKNRLATVQRLLSEKAAEVNTRDEDEYTPLHRAAYSGHIDVVRELVAKGADVHAVTVDGWTPLHSACKWNNTKVASFLLQHDADINAQTKGLLTPLHLAAGNRDSRDTLELLLMNRYIKPELKNNSQETASDIARRTSIYHYLFEIAEGCTNSSPPS.

The tract at residues 38–57 (TGTQSLWVGNSDEDEEQEEK) is disordered. S48 is subject to Phosphoserine. Over residues 48–57 (SDEDEEQEEK) the composition is skewed to acidic residues. ANK repeat units lie at residues 72-105 (DPSKLLLWAAEKNRLATVQRLLSEKAAEVNTRDE), 106-135 (DEYTPLHRAAYSGHIDVVRELVAKGADVHA), 139-168 (DGWTPLHSACKWNNTKVASFLLQHDADINA), and 172-205 (GLLTPLHLAAGNRDSRDTLELLLMNRYIKPELKN).

In terms of tissue distribution, expressed in spermatogonia, spermatocytes and round spermatids.

It localises to the nucleus. May have a role in spermatogenesis where it promotes autophagy in response to serum starvation, via the NF-kappaB pathway. The sequence is that of Ankyrin repeat domain-containing protein 49 (Ankrd49) from Mus musculus (Mouse).